A 269-amino-acid chain; its full sequence is Phosphatidylglycerol--prolipoprotein diacylglyceryl transferase (269 aa).

The next 4 membrane-spanning stretches (helical) occupy residues 14–34 (IVQI…AGII), 49–69 (VAPE…IPMA), 89–109 (VFAI…GLLA), and 118–138 (GYSL…GQAI). Arg140 contributes to the a 1,2-diacyl-sn-glycero-3-phospho-(1'-sn-glycerol) binding site. The next 3 helical transmembrane spans lie at 180–200 (TFLY…FVFF), 208–228 (GSIA…IEGL), and 240–260 (TAQL…WWLN).

It belongs to the Lgt family.

The protein localises to the cell inner membrane. The enzyme catalyses L-cysteinyl-[prolipoprotein] + a 1,2-diacyl-sn-glycero-3-phospho-(1'-sn-glycerol) = an S-1,2-diacyl-sn-glyceryl-L-cysteinyl-[prolipoprotein] + sn-glycerol 1-phosphate + H(+). The protein operates within protein modification; lipoprotein biosynthesis (diacylglyceryl transfer). Functionally, catalyzes the transfer of the diacylglyceryl group from phosphatidylglycerol to the sulfhydryl group of the N-terminal cysteine of a prolipoprotein, the first step in the formation of mature lipoproteins. The polypeptide is Phosphatidylglycerol--prolipoprotein diacylglyceryl transferase (Gloeobacter violaceus (strain ATCC 29082 / PCC 7421)).